The sequence spans 426 residues: 26S proteasome regulatory subunit 7B (426 aa).

Residue 209–216 (GPPGTGKT) participates in ATP binding.

The protein belongs to the AAA ATPase family.

It localises to the cytoplasm. Its subcellular location is the nucleus. The 26S proteasome is involved in the ATP-dependent degradation of ubiquitinated proteins. The regulatory (or ATPase) complex confers ATP dependency and substrate specificity to the 26S complex. In Oryza sativa subsp. japonica (Rice), this protein is 26S proteasome regulatory subunit 7B (RPT1B).